The sequence spans 268 residues: Probable membrane transporter protein HI_0806 (268 aa).

8 consecutive transmembrane segments (helical) span residues 6-26, 46-66, 79-99, 101-121, 147-167, 178-198, 212-232, and 248-268; these read IFILLICGICTNMVSAIFGIG, VISATSLTIVMCTALINLLFF, ILWSIAMVIGVQIGFELSFYF, TAIISLIFTVSLSALAIKTFL, GGGLIAGITGIGGGSILAPLV, IAVYTNYMMIIGGIGNLYGYL, LGLNFLVVGVVTLGSFEMSFF, and LLAIILFCIAAYMCILEFVFH.

This sequence belongs to the 4-toluene sulfonate uptake permease (TSUP) (TC 2.A.102) family.

Its subcellular location is the cell membrane. The polypeptide is Probable membrane transporter protein HI_0806 (Haemophilus influenzae (strain ATCC 51907 / DSM 11121 / KW20 / Rd)).